The following is a 481-amino-acid chain: Serine--tRNA ligase (481 aa).

Residue 284 to 286 (TAE) coordinates L-serine. 315 to 317 (RAE) lines the ATP pocket. Glu-338 contributes to the L-serine binding site. Position 405–408 (405–408 (EISS)) interacts with ATP. Ser-440 serves as a coordination point for L-serine.

The protein belongs to the class-II aminoacyl-tRNA synthetase family. Type-1 seryl-tRNA synthetase subfamily. In terms of assembly, homodimer. The tRNA molecule binds across the dimer.

It is found in the cytoplasm. It catalyses the reaction tRNA(Ser) + L-serine + ATP = L-seryl-tRNA(Ser) + AMP + diphosphate + H(+). The catalysed reaction is tRNA(Sec) + L-serine + ATP = L-seryl-tRNA(Sec) + AMP + diphosphate + H(+). It functions in the pathway aminoacyl-tRNA biosynthesis; selenocysteinyl-tRNA(Sec) biosynthesis; L-seryl-tRNA(Sec) from L-serine and tRNA(Sec): step 1/1. Functionally, catalyzes the attachment of serine to tRNA(Ser). Is also able to aminoacylate tRNA(Sec) with serine, to form the misacylated tRNA L-seryl-tRNA(Sec), which will be further converted into selenocysteinyl-tRNA(Sec). The polypeptide is Serine--tRNA ligase (Rhodopseudomonas palustris (strain BisB18)).